Reading from the N-terminus, the 232-residue chain is Imidazole glycerol phosphate synthase subunit HisF (232 aa).

Catalysis depends on residues aspartate 11 and aspartate 130.

Belongs to the HisA/HisF family. As to quaternary structure, heterodimer of HisH and HisF.

The protein resides in the cytoplasm. The enzyme catalyses 5-[(5-phospho-1-deoxy-D-ribulos-1-ylimino)methylamino]-1-(5-phospho-beta-D-ribosyl)imidazole-4-carboxamide + L-glutamine = D-erythro-1-(imidazol-4-yl)glycerol 3-phosphate + 5-amino-1-(5-phospho-beta-D-ribosyl)imidazole-4-carboxamide + L-glutamate + H(+). It participates in amino-acid biosynthesis; L-histidine biosynthesis; L-histidine from 5-phospho-alpha-D-ribose 1-diphosphate: step 5/9. Its function is as follows. IGPS catalyzes the conversion of PRFAR and glutamine to IGP, AICAR and glutamate. The HisF subunit catalyzes the cyclization activity that produces IGP and AICAR from PRFAR using the ammonia provided by the HisH subunit. The chain is Imidazole glycerol phosphate synthase subunit HisF from Listeria monocytogenes serotype 4a (strain HCC23).